The chain runs to 449 residues: Ras-related GTP-binding protein D (449 aa).

Residues 1-55 (MSQVLGKPQPQGEDGGEDQEEDELVGLAGYEDGPESSDAELDSGPEEGESRRNSW) form a disordered region. Composition is skewed to acidic residues over residues 14 to 24 (DGGEDQEEDEL) and 32 to 47 (DGPESSDAELDSGPEE). Residues R120, R121, S122, G123, K124, S125, S126, and T140 each contribute to the GTP site. GDP contacts are provided by R121, S122, G123, K124, S125, S126, T140, E144, and T146. 5 residues coordinate GTP: T146, G169, H228, K229, and D231. GDP is bound by residues H228, K229, D231, S269, and I270. A GTP-binding site is contributed by I270. The disordered stretch occupies residues 428–449 (KAQSRLPKKTGATPNGTPRVLL).

This sequence belongs to the GTR/RAG GTP-binding protein family. Forms a heterodimer with RRAGA in a sequence-independent manner and RRAGB. Heterodimerization stabilizes RRAG proteins. The GDP-bound form of RRAGD (in complex with the GTP-bound form of RRAGA or RRAGB), interacts with RPTOR, thereby promoting recruitment of mTORC1 to the lysosomes. Component of the lysosomal folliculin complex (LFC), composed of FLCN, FNIP1 (or FNIP2), RagA/RRAGA or RagB/RRAGB GDP-bound, RagC/RRAGC or RagD/RRAGD GTP-bound, and Ragulator. Interacts with NOL8. Interacts with SH3BP4; the interaction with this negative regulator is most probably direct, preferentially occurs with the inactive GDP-bound form of RRAGD and is negatively regulated by amino acids. The Rag heterodimer interacts with SLC38A9; the probable amino acid sensor. Interacts with SESN1, SESN2 and SESN3. The GDP-bound form interacts with TFEB. The GDP-bound form interacts with TFE3. In terms of tissue distribution, expressed in the distal tubule of the kidney.

The protein resides in the cytoplasm. Its subcellular location is the nucleus. It is found in the lysosome membrane. The enzyme catalyses GTP + H2O = GDP + phosphate + H(+). Its activity is regulated as follows. The activation of RagD/RRAGD is mediated by a GTPase activating protein (GAP). In high-amino acid conditions, activated by GTPase activating protein FLCN that stimulates RRAGD GTPase activity to turn it into its active GDP-bound form. In response to amino acid depletion, the GATOR1 complex inactivates RagC/RRAGC by securing the GTP-bound inactive form. Its function is as follows. Guanine nucleotide-binding protein that plays a crucial role in the cellular response to amino acid availability through regulation of the mTORC1 signaling cascade. Forms heterodimeric Rag complexes with RagA/RRAGA or RagB/RRAGB and cycles between an inactive GTP-bound and an active GDP-bound form: RagD/RRAGD is in its active form when GDP-bound RagD/RRAGD forms a complex with GTP-bound RagA/RRAGA (or RagB/RRAGB) and in an inactive form when GTP-bound RagD/RRAGD heterodimerizes with GDP-bound RagA/RRAGA (or RagB/RRAGB). In its active form, promotes the recruitment of mTORC1 to the lysosomes and its subsequent activation by the GTPase RHEB. This is a crucial step in the activation of the MTOR signaling cascade by amino acids. Also plays a central role in the non-canonical mTORC1 complex, which acts independently of RHEB and specifically mediates phosphorylation of MiT/TFE factors TFEB and TFE3: GDP-bound RagD/RRAGD mediates recruitment of MiT/TFE factors TFEB and TFE3. This chain is Ras-related GTP-binding protein D, found in Mus musculus (Mouse).